The sequence spans 91 residues: Protein transport protein Sec61 subunit beta (91 aa).

Residues 1–45 (MSTSAQVPGGPAAQMKRRNNAQRQEAKASQRPTSTRSVGAGGSSS) are disordered. The Cytoplasmic portion of the chain corresponds to 1 to 62 (MSTSAQVPGG…DESQGLKVDP (62 aa)). A compositionally biased stretch (polar residues) spans 30 to 45 (QRPTSTRSVGAGGSSS). Residues 63 to 83 (VVVMVLSLGFIFSVVALHILA) traverse the membrane as a helical segment.

Belongs to the SEC61-beta family. In terms of assembly, heterotrimeric complex composed of SEC61, SEB1 and SSS1.

Its subcellular location is the endoplasmic reticulum membrane. Its function is as follows. Necessary for protein translocation in the endoplasmic reticulum. The sequence is that of Protein transport protein Sec61 subunit beta (SBH1) from Yarrowia lipolytica (strain CLIB 122 / E 150) (Yeast).